Here is a 187-residue protein sequence, read N- to C-terminus: UPF0301 protein HS_0009 (187 aa).

It belongs to the UPF0301 (AlgH) family.

This Histophilus somni (strain 129Pt) (Haemophilus somnus) protein is UPF0301 protein HS_0009.